We begin with the raw amino-acid sequence, 729 residues long: Polyribonucleotide nucleotidyltransferase (729 aa).

The Mg(2+) site is built by D485 and D491. The 60-residue stretch at 552 to 611 (PRITTMKVAEDKIRTIIGKGGATIKGLIESTGVSIDIDDSGVVQLFSPDKMALEEAQKQI) folds into the KH domain. The S1 motif domain occupies 621-689 (GQTYQGKVSK…KQGRVKLEWK (69 aa)).

This sequence belongs to the polyribonucleotide nucleotidyltransferase family. Component of the RNA degradosome, which is a multiprotein complex involved in RNA processing and mRNA degradation. Mg(2+) serves as cofactor.

Its subcellular location is the cytoplasm. It catalyses the reaction RNA(n+1) + phosphate = RNA(n) + a ribonucleoside 5'-diphosphate. Functionally, involved in mRNA degradation. Catalyzes the phosphorolysis of single-stranded polyribonucleotides processively in the 3'- to 5'-direction. The chain is Polyribonucleotide nucleotidyltransferase from Legionella pneumophila subsp. pneumophila (strain Philadelphia 1 / ATCC 33152 / DSM 7513).